Consider the following 343-residue polypeptide: Dihydroorotase (343 aa).

Zn(2+) contacts are provided by His-14 and His-16. Substrate is bound by residues 16-18 (HLR) and Asn-42. Zn(2+) is bound by residues Lys-97, His-136, His-170, and Asp-242. Lys-97 carries the post-translational modification N6-carboxylysine. His-136 is a binding site for substrate. Residue Asp-242 is part of the active site. The substrate site is built by His-246 and Ala-258.

The protein belongs to the metallo-dependent hydrolases superfamily. DHOase family. Class II DHOase subfamily. As to quaternary structure, homodimer. Requires Zn(2+) as cofactor.

The enzyme catalyses (S)-dihydroorotate + H2O = N-carbamoyl-L-aspartate + H(+). Its pathway is pyrimidine metabolism; UMP biosynthesis via de novo pathway; (S)-dihydroorotate from bicarbonate: step 3/3. In terms of biological role, catalyzes the reversible cyclization of carbamoyl aspartate to dihydroorotate. In Helicobacter hepaticus (strain ATCC 51449 / 3B1), this protein is Dihydroorotase.